A 1813-amino-acid polypeptide reads, in one-letter code: Nonribosomal peptide synthetase 1 (1813 aa).

The segment at 89–494 (EKARRDPSRQ…GRGDQQVKLR (406 aa)) is adenylation. One can recognise a Carrier 1 domain in the interval 624–699 (EPQSERERQL…ELAITLKHSD (76 aa)). Ser660 carries the O-(pantetheine 4'-phosphoryl)serine modification. Residues 738–1159 (DVYPCTTLQE…LPMTDDELAE (422 aa)) are condensation 1. One can recognise a Carrier 2 domain in the interval 1282–1358 (QVTTPKQQKL…DMADIAKESL (77 aa)). At Ser1319 the chain carries O-(pantetheine 4'-phosphoryl)serine. The segment at 1427 to 1806 (FYLDAAVDQS…STLFQTDVME (380 aa)) is condensation 2.

This sequence belongs to the NRP synthetase family.

It participates in siderophore biosynthesis. Its function is as follows. Nonribosomal peptide synthetase; part of the gene cluster that mediates the biosynthesis of hydroxamate-containing siderophores that play a critical role in virulence via intracellular iron acquisition during macrophage infection. This chain is Nonribosomal peptide synthetase 1, found in Ajellomyces capsulatus (Darling's disease fungus).